A 120-amino-acid polypeptide reads, in one-letter code: UPF0382 membrane protein SSP2132 (120 aa).

The next 4 membrane-spanning stretches (helical) occupy residues 3–23 (VFII…AFGA), 46–66 (MYHG…SINV), 69–89 (VGWL…ILAL), and 94–114 (IIGA…LMLV).

Belongs to the UPF0382 family.

Its subcellular location is the cell membrane. The chain is UPF0382 membrane protein SSP2132 from Staphylococcus saprophyticus subsp. saprophyticus (strain ATCC 15305 / DSM 20229 / NCIMB 8711 / NCTC 7292 / S-41).